Reading from the N-terminus, the 282-residue chain is Pantothenate synthetase (282 aa).

Position 33-40 (33-40 (MGALHAGH)) interacts with ATP. The Proton donor role is filled by His40. Gln64 contributes to the (R)-pantoate binding site. Gln64 is a beta-alanine binding site. 150–153 (GEKD) is an ATP binding site. Gln156 is a (R)-pantoate binding site. ATP-binding positions include Val179 and 187-190 (LSSR).

This sequence belongs to the pantothenate synthetase family. As to quaternary structure, homodimer.

The protein localises to the cytoplasm. The enzyme catalyses (R)-pantoate + beta-alanine + ATP = (R)-pantothenate + AMP + diphosphate + H(+). It participates in cofactor biosynthesis; (R)-pantothenate biosynthesis; (R)-pantothenate from (R)-pantoate and beta-alanine: step 1/1. In terms of biological role, catalyzes the condensation of pantoate with beta-alanine in an ATP-dependent reaction via a pantoyl-adenylate intermediate. In Rhodospirillum rubrum (strain ATCC 11170 / ATH 1.1.1 / DSM 467 / LMG 4362 / NCIMB 8255 / S1), this protein is Pantothenate synthetase.